The sequence spans 208 residues: Protein-L-isoaspartate O-methyltransferase (208 aa).

Ser59 is a catalytic residue.

It belongs to the methyltransferase superfamily. L-isoaspartyl/D-aspartyl protein methyltransferase family.

It is found in the cytoplasm. It catalyses the reaction [protein]-L-isoaspartate + S-adenosyl-L-methionine = [protein]-L-isoaspartate alpha-methyl ester + S-adenosyl-L-homocysteine. In terms of biological role, catalyzes the methyl esterification of L-isoaspartyl residues in peptides and proteins that result from spontaneous decomposition of normal L-aspartyl and L-asparaginyl residues. It plays a role in the repair and/or degradation of damaged proteins. This is Protein-L-isoaspartate O-methyltransferase from Vibrio vulnificus (strain CMCP6).